The chain runs to 226 residues: Lipoprotein-releasing system ATP-binding protein LolD (226 aa).

Positions 6 to 226 (IELKSVERHY…TLADGKVVPL (221 aa)) constitute an ABC transporter domain. 42 to 49 (APSGTGKS) contacts ATP.

It belongs to the ABC transporter superfamily. Lipoprotein translocase (TC 3.A.1.125) family. In terms of assembly, the complex is composed of two ATP-binding proteins (LolD) and two transmembrane proteins (LolC and LolE).

The protein localises to the cell inner membrane. Part of the ABC transporter complex LolCDE involved in the translocation of mature outer membrane-directed lipoproteins, from the inner membrane to the periplasmic chaperone, LolA. Responsible for the formation of the LolA-lipoprotein complex in an ATP-dependent manner. In Mesorhizobium japonicum (strain LMG 29417 / CECT 9101 / MAFF 303099) (Mesorhizobium loti (strain MAFF 303099)), this protein is Lipoprotein-releasing system ATP-binding protein LolD.